A 255-amino-acid chain; its full sequence is Protein DAL82 (255 aa).

The disordered stretch occupies residues 87–149 (PEHPRPRTKF…SQPLPLDSIT (63 aa)). The span at 128–138 (PNNHSSDDEHS) shows a compositional bias: basic and acidic residues.

In terms of biological role, positive regulator of allophanate-induced genes in S.cerevisiae. This chain is Protein DAL82 (DAL82), found in Saccharomyces cerevisiae (strain ATCC 204508 / S288c) (Baker's yeast).